Reading from the N-terminus, the 239-residue chain is Ribosomal RNA small subunit methyltransferase G (239 aa).

Residues Gly-77, Phe-82, Ala-128–Glu-129, and Arg-147 each bind S-adenosyl-L-methionine.

Belongs to the methyltransferase superfamily. RNA methyltransferase RsmG family.

It localises to the cytoplasm. Its function is as follows. Specifically methylates the N7 position of guanine in position 535 of 16S rRNA. This Bacillus anthracis (strain A0248) protein is Ribosomal RNA small subunit methyltransferase G.